Consider the following 657-residue polypeptide: Hemocyanin B chain (657 aa).

Cysteine 93 and cysteine 98 are oxidised to a cystine. Residue asparagine 167 is glycosylated (N-linked (GlcNAc...) asparagine). Positions 194, 198, 224, 344, 348, and 384 each coordinate Cu cation. 2 cysteine pairs are disulfide-bonded: cysteine 483–cysteine 502 and cysteine 562–cysteine 609.

It belongs to the tyrosinase family. Hemocyanin subfamily. As to quaternary structure, hexamer of a number of different chains, of which A, B, and C have been identified. Hemolymph.

It is found in the secreted. The protein resides in the extracellular space. Its function is as follows. Hemocyanins are copper-containing oxygen carriers occurring freely dissolved in the hemolymph of many mollusks and arthropods. In Panulirus interruptus (California spiny lobster), this protein is Hemocyanin B chain.